The primary structure comprises 114 residues: uncharacterized protein (114 aa).

Its function is as follows. May be associated with transposition functions of transposon Tn903. This is an uncharacterized protein from Escherichia coli.